A 1204-amino-acid polypeptide reads, in one-letter code: TPR repeat-containing protein DDB_G0287999 (1204 aa).

Low complexity predominate over residues 32-48 (TTDTTTTTSTSTTTDTD). Residues 32 to 55 (TTDTTTTTSTSTTTDTDTNSEKSN) are disordered. TPR repeat units follow at residues 263-296 (SKGL…YKDL), 379-412 (NDSN…DQLY), and 583-617 (IQHF…GSVT). A disordered region spans residues 360–387 (QPPPQEQQLMDDDSNSNSNNDSNNIIKN). The segment covering 374 to 387 (NSNSNNDSNNIIKN) has biased composition (low complexity). Disordered regions lie at residues 639–660 (NNNN…NNNN) and 761–797 (DDND…KTTT). Positions 766-778 (DNNNNNNNNNNNN) are enriched in low complexity.

The polypeptide is TPR repeat-containing protein DDB_G0287999 (Dictyostelium discoideum (Social amoeba)).